The primary structure comprises 193 residues: Mediator of RNA polymerase II transcription subunit 30 (193 aa).

A disordered region spans residues 1-20 (MSTPPLAASGMAPGPFAGPQ). An N-acetylserine modification is found at serine 2. The span at 10–20 (GMAPGPFAGPQ) shows a compositional bias: low complexity. Positions 71–93 (YQDRLAKLQDHLRQLSILFRKLR) form a coiled coil.

The protein belongs to the Mediator complex subunit 30 family. Component of the Mediator complex, which is composed of MED1, MED4, MED6, MED7, MED8, MED9, MED10, MED11, MED12, MED13, MED13L, MED14, MED15, MED16, MED17, MED18, MED19, MED20, MED21, MED22, MED23, MED24, MED25, MED26, MED27, MED29, MED30, MED31, CCNC, CDK8 and CDC2L6/CDK11. The MED12, MED13, CCNC and CDK8 subunits form a distinct module termed the CDK8 module. Mediator containing the CDK8 module is less active than Mediator lacking this module in supporting transcriptional activation. Individual preparations of the Mediator complex lacking one or more distinct subunits have been variously termed ARC, CRSP, DRIP, PC2, SMCC and TRAP.

It localises to the nucleus. In terms of biological role, component of the Mediator complex, a coactivator involved in the regulated transcription of nearly all RNA polymerase II-dependent genes. Mediator functions as a bridge to convey information from gene-specific regulatory proteins to the basal RNA polymerase II transcription machinery. Mediator is recruited to promoters by direct interactions with regulatory proteins and serves as a scaffold for the assembly of a functional preinitiation complex with RNA polymerase II and the general transcription factors. The polypeptide is Mediator of RNA polymerase II transcription subunit 30 (MED30) (Bos taurus (Bovine)).